The following is a 154-amino-acid chain: Deoxyuridine 5'-triphosphate nucleotidohydrolase (154 aa).

Substrate contacts are provided by residues 64 to 66 (RSG), Asn77, 81 to 83 (TID), and Lys91.

Belongs to the dUTPase family. As to quaternary structure, homotrimer. Mg(2+) is required as a cofactor.

The enzyme catalyses dUTP + H2O = dUMP + diphosphate + H(+). The protein operates within pyrimidine metabolism; dUMP biosynthesis; dUMP from dCTP (dUTP route): step 2/2. In terms of biological role, this enzyme is involved in nucleotide metabolism: it produces dUMP, the immediate precursor of thymidine nucleotides and it decreases the intracellular concentration of dUTP so that uracil cannot be incorporated into DNA. The polypeptide is Deoxyuridine 5'-triphosphate nucleotidohydrolase (Mycobacterium avium (strain 104)).